Consider the following 227-residue polypeptide: DNA mismatch repair protein MutH (227 aa).

The protein belongs to the MutH family.

The protein resides in the cytoplasm. In terms of biological role, sequence-specific endonuclease that cleaves unmethylated GATC sequences. It is involved in DNA mismatch repair. The protein is DNA mismatch repair protein MutH of Vibrio vulnificus (strain CMCP6).